The chain runs to 604 residues: Elongation factor 4 (604 aa).

The 182-residue stretch at 10 to 191 (KNIRNFSIIA…KIITTIPAPS (182 aa)) folds into the tr-type G domain. GTP is bound by residues 22-27 (DHGKST) and 138-141 (NKID).

The protein belongs to the TRAFAC class translation factor GTPase superfamily. Classic translation factor GTPase family. LepA subfamily.

The protein localises to the cell inner membrane. It catalyses the reaction GTP + H2O = GDP + phosphate + H(+). In terms of biological role, required for accurate and efficient protein synthesis under certain stress conditions. May act as a fidelity factor of the translation reaction, by catalyzing a one-codon backward translocation of tRNAs on improperly translocated ribosomes. Back-translocation proceeds from a post-translocation (POST) complex to a pre-translocation (PRE) complex, thus giving elongation factor G a second chance to translocate the tRNAs correctly. Binds to ribosomes in a GTP-dependent manner. This Helicobacter pylori (strain J99 / ATCC 700824) (Campylobacter pylori J99) protein is Elongation factor 4.